Here is a 384-residue protein sequence, read N- to C-terminus: PqqA peptide cyclase (384 aa).

The region spanning 5–220 (VGLPLWLLAE…TNEYREKLKA (216 aa)) is the Radical SAM core domain. 3 residues coordinate [4Fe-4S] cluster: cysteine 19, cysteine 23, and cysteine 26.

The protein belongs to the radical SAM superfamily. PqqE family. In terms of assembly, interacts with PqqD. The interaction is necessary for activity of PqqE. Requires [4Fe-4S] cluster as cofactor.

The catalysed reaction is [PQQ precursor protein] + S-adenosyl-L-methionine = E-Y cross-linked-[PQQ precursor protein] + 5'-deoxyadenosine + L-methionine + H(+). The protein operates within cofactor biosynthesis; pyrroloquinoline quinone biosynthesis. Catalyzes the cross-linking of a glutamate residue and a tyrosine residue in the PqqA protein as part of the biosynthesis of pyrroloquinoline quinone (PQQ). The chain is PqqA peptide cyclase from Acinetobacter baumannii (strain AB0057).